Consider the following 844-residue polypeptide: RING finger containing E3 ubiquitin-protein ligase WSV222 (844 aa).

229-236 contacts ATP; sequence AEDDKGKT. Residues 308–359 form an RING-type; atypical zinc finger; that stretch reads CGVCATSVEEDENEGKTTSLSWYQMNCKHYIHCECLMGMCAAAGNVQCPMCR.

Interacts with host UBE2E1/UBCH6; this interaction results in WSV222 auto-ubiquitination. Interacts with host tumor suppressor-like protein.

The catalysed reaction is S-ubiquitinyl-[E2 ubiquitin-conjugating enzyme]-L-cysteine + [acceptor protein]-L-lysine = [E2 ubiquitin-conjugating enzyme]-L-cysteine + N(6)-ubiquitinyl-[acceptor protein]-L-lysine.. The protein operates within protein modification; protein ubiquitination. In terms of biological role, probable E3 ubiquitin-protein ligase which accepts ubiquitin from the E2 ubiquitin-conjugating enzyme UBE2E1/UBCH6 in the form of a thioester and then directly transfers the ubiquitin to targeted substrates. Mediates ubiquitination of host tumor-suppressor-like protein (TSL) targeting it for degradation. Might function as an anti-apoptosis protein by counteracting TSL-induced apoptosis. The polypeptide is RING finger containing E3 ubiquitin-protein ligase WSV222 (White spot syndrome virus (isolate Shrimp/China/Tongan/1996) (WSSV)).